The following is a 334-amino-acid chain: Tryptophan--tRNA ligase (334 aa).

ATP contacts are provided by residues 11–13 and 19–20; these read QPS and GN. Positions 12 to 20 match the 'HIGH' region motif; the sequence is PSGELTIGN. Position 135 (Asp135) interacts with L-tryptophan. ATP is bound by residues 147–149, Ile186, and 195–199; these read GDD and KMSKS. A 'KMSKS' region motif is present at residues 195-199; that stretch reads KMSKS.

This sequence belongs to the class-I aminoacyl-tRNA synthetase family. Homodimer.

The protein resides in the cytoplasm. The catalysed reaction is tRNA(Trp) + L-tryptophan + ATP = L-tryptophyl-tRNA(Trp) + AMP + diphosphate + H(+). In terms of biological role, catalyzes the attachment of tryptophan to tRNA(Trp). The polypeptide is Tryptophan--tRNA ligase (Haemophilus influenzae (strain ATCC 51907 / DSM 11121 / KW20 / Rd)).